The following is a 318-amino-acid chain: DNA repair nuclease/redox regulator APEX1 (318 aa).

Residues 1–33 (MPKRGKKGAVAEDGDELKTEPEAKKSKTTAKKN) are necessary for interaction with YBX1, binding to RNA, association together with NPM1 to rRNA, endoribonuclease activity on abasic RNA and localization in the nucleoli. A disordered region spans residues 1–60 (MPKRGKKGAVAEDGDELKTEPEAKKSKTTAKKNDKEAAGEGPALYEDPPDQKTSPSGKPA). 2 positions are modified to N6-acetyllysine; by EP300: Lys-6 and Lys-7. The short motif at 8–13 (GAVAED) is the Nuclear localization signal (NLS) element. Positions 16 to 38 (ELKTEPEAKKSKTTAKKNDKEAA) are enriched in basic and acidic residues. The segment at 23–33 (AKKSKTTAKKN) is necessary for interaction with NPM1 and for efficient rRNA binding. Lys-27, Lys-31, Lys-32, and Lys-35 each carry N6-acetyllysine. Ser-54 is modified (phosphoserine). A Nuclear export signal (NES) motif is present at residues 64 to 80 (ICSWNVDGLRAWIKKKG). Cys-65 carries the post-translational modification S-nitrosocysteine; alternate. A disulfide bond links Cys-65 and Cys-93. Asp-70 contacts Mg(2+). The residue at position 93 (Cys-93) is an S-nitrosocysteine; alternate. Glu-96 contacts Mg(2+). Tyr-171 is a catalytic residue. N6-acetyllysine is present on Lys-197. Residues Asp-210 and Asn-212 each contribute to the Mg(2+) site. Asp-210 serves as the catalytic Proton donor/acceptor. Thr-233 carries the phosphothreonine; by CDK5 modification. A mitochondrial targeting sequence (MTS) region spans residues 289 to 318 (HSLLTALCDSKIRSKALGSDHCPITLYLAL). Asp-308 contributes to the Mg(2+) binding site. An S-nitrosocysteine modification is found at Cys-310.

The protein belongs to the DNA repair enzymes AP/ExoA family. As to quaternary structure, monomer. Homodimer; disulfide-linked. Component of the SET complex, composed of at least APEX1, SET, ANP32A, HMGB2, NME1 and TREX1. Associates with the dimer XRCC5/XRCC6 in a DNA-dependent manner. Interacts with SIRT1; the interaction is increased in the context of genotoxic stress. Interacts with HDAC1, HDAC2 and HDAC3; the interactions are not dependent on the APEX1 acetylation status. Interacts with XRCC1; the interaction is induced by SIRT1 and increased with the APEX1 acetylated form. Interacts with NPM1 (via N-terminal domain); the interaction is RNA-dependent and decreases in hydrogen peroxide-damaged cells. Interacts (via N-terminus) with YBX1 (via C-terminus); the interaction is increased in presence of APEX1 acetylated at Lys-6 and Lys-7. Interacts with HNRNPL; the interaction is DNA-dependent. Interacts (via N-terminus) with KPNA1 and KPNA2. Interacts with TXN; the interaction stimulates the FOS/JUN AP-1 complex DNA-binding activity in a redox-dependent manner. Interacts with GZMA, KRT8, MDM2, POLB, PRDX6, PRPF19, RPLP0, TOMM20 and WDR77. Binds to CDK5. Mg(2+) is required as a cofactor. The cofactor is Mn(2+). In terms of processing, phosphorylated. Phosphorylation by kinase PKC or casein kinase CK2 results in enhanced redox activity that stimulates binding of the FOS/JUN AP-1 complex to its cognate binding site. AP-endodeoxyribonuclease activity is not affected by CK2-mediated phosphorylation. Phosphorylation of Thr-233 by CDK5 in response to MPP(+)/MPTP (1-methyl-4-phenylpyridinium) reduces AP-endodeoxyribonuclease activity resulting in accumulation of DNA damage and contributing to neuronal death. Post-translationally, acetylated on Lys-6 and Lys-7. Acetylation is increased by the transcriptional coactivator EP300 acetyltransferase, genotoxic agents like H(2)O(2) and methyl methanesulfonate (MMS). Acetylation increases its binding affinity to the negative calcium response element (nCaRE) DNA promoter. The acetylated form induces a stronger binding of YBX1 to the Y-box sequence in the MDR1 promoter than the unacetylated form. Deacetylated on lysines. Lys-6 and Lys-7 are deacetylated by SIRT1. Cleaved at Lys-31 by granzyme A to create the mitochondrial form; leading in reduction of binding to DNA, AP endodeoxyribonuclease activity, redox activation of transcription factors and to enhanced cell death. Cleaved by granzyme K; leading to intracellular ROS accumulation and enhanced cell death after oxidative stress. In terms of processing, cys-69 and Cys-93 are nitrosylated in response to nitric oxide (NO) and lead to the exposure of the nuclear export signal (NES). Post-translationally, ubiquitinated by MDM2; leading to translocation to the cytoplasm and proteasomal degradation.

The protein resides in the nucleus. It is found in the nucleolus. It localises to the nucleus speckle. Its subcellular location is the endoplasmic reticulum. The protein localises to the cytoplasm. The protein resides in the mitochondrion. The catalysed reaction is a deoxyribonucleotide-2'-deoxyribose-5'-monophosphate-DNA + H2O = a 5'-end 2'-deoxyribose-5'-monophosphate-DNA + a 3'-end 2'-deoxyribonucleotide-DNA + H(+). It carries out the reaction Exonucleolytic cleavage in the 3'- to 5'-direction to yield nucleoside 5'-phosphates.. The enzyme catalyses a 3'-end 2'-deoxyribonucleotide-3'-phosphoglycolate-DNA + H2O = 2-phosphoglycolate + a 3'-end 2'-deoxyribonucleotide-DNA + H(+). It catalyses the reaction a 3'-end 2'-deoxyribonucleotide-8-oxoguanine-DNA + H2O = 8-oxo-dGMP + a 3'-end 2'-deoxyribonucleotide-DNA + H(+). Its activity is regulated as follows. NPM1 stimulates endodeoxyribonuclease activity on double-stranded DNA with AP sites, but inhibits endoribonuclease activity on single-stranded RNA containing AP sites. Its function is as follows. Multifunctional protein that plays a central role in the cellular response to oxidative stress. The two major activities of APEX1 are DNA repair and redox regulation of transcriptional factors. Functions as an apurinic/apyrimidinic (AP) endodeoxyribonuclease in the base excision repair (BER) pathway of DNA lesions induced by oxidative and alkylating agents. Initiates repair of AP sites in DNA by catalyzing hydrolytic incision of the phosphodiester backbone immediately adjacent to the damage, generating a single-strand break with 5'-deoxyribose phosphate and 3'-hydroxyl ends. Also incises at AP sites in the DNA strand of DNA/RNA hybrids, single-stranded DNA regions of R-loop structures, and single-stranded RNA molecules. Operates at switch sites of immunoglobulin (Ig) constant regions where it mediates Ig isotype class switch recombination. Processes AP sites induced by successive action of AICDA and UNG. Generates staggered nicks in opposite DNA strands resulting in the formation of double-strand DNA breaks that are finally resolved via non-homologous end joining repair pathway. Has 3'-5' exodeoxyribonuclease activity on mismatched deoxyribonucleotides at the 3' termini of nicked or gapped DNA molecules during short-patch BER. Possesses DNA 3' phosphodiesterase activity capable of removing lesions (such as phosphoglycolate and 8-oxoguanine) blocking the 3' side of DNA strand breaks. Also acts as an endoribonuclease involved in the control of single-stranded RNA metabolism. Plays a role in regulating MYC mRNA turnover by preferentially cleaving in between UA and CA dinucleotides of the MYC coding region determinant (CRD). In association with NMD1, plays a role in the rRNA quality control process during cell cycle progression. Acts as a loading factor for POLB onto non-incised AP sites in DNA and stimulates the 5'-terminal deoxyribose 5'-phosphate (dRp) excision activity of POLB. Exerts reversible nuclear redox activity to regulate DNA binding affinity and transcriptional activity of transcriptional factors by controlling the redox status of their DNA-binding domain, such as the FOS/JUN AP-1 complex after exposure to IR. Involved in calcium-dependent down-regulation of parathyroid hormone (PTH) expression by binding to negative calcium response elements (nCaREs). Together with HNRNPL or the dimer XRCC5/XRCC6, associates with nCaRE, acting as an activator of transcriptional repression. May also play a role in the epigenetic regulation of gene expression by participating in DNA demethylation. Stimulates the YBX1-mediated MDR1 promoter activity, when acetylated at Lys-6 and Lys-7, leading to drug resistance. Plays a role in protection from granzyme-mediated cellular repair leading to cell death. Binds DNA and RNA. Associates, together with YBX1, on the MDR1 promoter. Together with NPM1, associates with rRNA. The chain is DNA repair nuclease/redox regulator APEX1 (APEX1) from Pongo pygmaeus (Bornean orangutan).